A 106-amino-acid polypeptide reads, in one-letter code: MSELLINDYTRKGFVDGLCLRLPTICIRPGKPNKATSSFVSSIIREPLHGETSICPVAEKMAFSFIKFLGKKKEEWALAITGYVVSIPIVLPILIIFIKAILDLGK.

The chain crosses the membrane as a helical span at residues 78–98 (LAITGYVVSIPIVLPILIIFI).

The protein localises to the membrane. This is an uncharacterized protein from Haemophilus influenzae (strain ATCC 51907 / DSM 11121 / KW20 / Rd).